A 278-amino-acid polypeptide reads, in one-letter code: NAD kinase (278 aa).

Asp-56 acts as the Proton acceptor in catalysis. Residues 56–57 (DG), 132–133 (NE), Arg-158, Asp-160, and 171–176 (TAYNKS) each bind NAD(+).

This sequence belongs to the NAD kinase family. Requires a divalent metal cation as cofactor.

Its subcellular location is the cytoplasm. It carries out the reaction NAD(+) + ATP = ADP + NADP(+) + H(+). Its function is as follows. Involved in the regulation of the intracellular balance of NAD and NADP, and is a key enzyme in the biosynthesis of NADP. Catalyzes specifically the phosphorylation on 2'-hydroxyl of the adenosine moiety of NAD to yield NADP. This Streptococcus agalactiae serotype III (strain NEM316) protein is NAD kinase.